The chain runs to 349 residues: Phosphoribosylformylglycinamidine cyclo-ligase (349 aa).

Belongs to the AIR synthase family.

The protein resides in the cytoplasm. It catalyses the reaction 2-formamido-N(1)-(5-O-phospho-beta-D-ribosyl)acetamidine + ATP = 5-amino-1-(5-phospho-beta-D-ribosyl)imidazole + ADP + phosphate + H(+). The protein operates within purine metabolism; IMP biosynthesis via de novo pathway; 5-amino-1-(5-phospho-D-ribosyl)imidazole from N(2)-formyl-N(1)-(5-phospho-D-ribosyl)glycinamide: step 2/2. This chain is Phosphoribosylformylglycinamidine cyclo-ligase, found in Methanococcus maripaludis (strain DSM 14266 / JCM 13030 / NBRC 101832 / S2 / LL).